A 98-amino-acid polypeptide reads, in one-letter code: Lipolysis-activating peptide 1-alpha chain (98 aa).

Positions 1–22 are cleaved as a signal peptide; sequence MMKFVLFGMIVILFSLMGSIRG. One can recognise an LCN-type CS-alpha/beta domain in the interval 26–89; the sequence is PGNYPTNAYG…IWNAVKNHCT (64 aa). Cystine bridges form between Cys40–Cys63, Cys49–Cys68, and Cys53–Cys70. Asn96 bears the Asparagine amide mark.

It belongs to the long (3 C-C) scorpion toxin superfamily. In terms of assembly, monomer (edited version) and heterodimer (non-edited version) of this alpha chain and a beta chain (AC Q95P90). Expressed by the venom gland.

The protein resides in the secreted. Its function is as follows. The heterodimer non-edited LVP1 induces lipolysis in rat adipocytes. Induction of lipolysis by LVP1 appears to be mediated through the beta-2 adrenergic receptor pathway (ADRB2). Functionally, the edited BmKBTx, similar to beta-toxins, may modulate voltage-gated sodium channels (Nav) and may block voltage-gated potassium channels (Kv). Seems to be a rare component in the venom. In Olivierus martensii (Manchurian scorpion), this protein is Lipolysis-activating peptide 1-alpha chain (LVP1a).